A 143-amino-acid chain; its full sequence is Myosin 1 light chain cam2 (143 aa).

EF-hand domains follow at residues 6–41 (EQTD…LGIN), 75–110 (ESEE…LGEK), and 111–143 (LSDN…IMAK).

The protein belongs to the calmodulin family. In terms of assembly, interacts with myo1 and pik1.

It is found in the cytoplasm. The protein localises to the prospore membrane. Functionally, plays a role in meiosis and sporulation. In Schizosaccharomyces pombe (strain 972 / ATCC 24843) (Fission yeast), this protein is Myosin 1 light chain cam2.